Here is a 351-residue protein sequence, read N- to C-terminus: Inactive RHOMBOID-like protein 8 (351 aa).

The next 7 helical transmembrane spans lie at 48–68 (TWLV…TMGV), 130–150 (WLHS…FVGI), 160–180 (RIAV…VLFV), 183–203 (IPSI…LSAL), 216–236 (ALAI…LPFI), 239–259 (FANI…LFKP), and 294–314 (IICL…ACWG).

It belongs to the peptidase S54 family. Expressed in pollen mother cell.

Its subcellular location is the golgi apparatus membrane. Probable inactive rhomboid-type serine protease. Functionally, probably essential for the meiosis stage-specific callose accumulation and pollen exine formation. This is Inactive RHOMBOID-like protein 8 from Arabidopsis thaliana (Mouse-ear cress).